The primary structure comprises 416 residues: Histidine--tRNA ligase (416 aa).

It belongs to the class-II aminoacyl-tRNA synthetase family. In terms of assembly, homodimer.

The protein localises to the cytoplasm. It carries out the reaction tRNA(His) + L-histidine + ATP = L-histidyl-tRNA(His) + AMP + diphosphate + H(+). This Clostridium novyi (strain NT) protein is Histidine--tRNA ligase.